The following is a 171-amino-acid chain: Disulfide bond formation protein B (171 aa).

Residues 1 to 13 (MSALTRFAQSRLA) are Cytoplasmic-facing. A helical transmembrane segment spans residues 14-30 (WTLLLLTAVGLEACALF). The Periplasmic segment spans residues 31 to 48 (FQHVMKLDPCVMCIYQRL). Cys40 and Cys43 are oxidised to a cystine. Residues 49–64 (AVLGVLTAGLIGVVGH) traverse the membrane as a helical segment. Over 65–71 (QFRLLRF) the chain is Cytoplasmic. A helical transmembrane segment spans residues 72–89 (LGVLLWGVSAAWGLKLAL). Residues 90–144 (ELVEMQTNPSPFSTCSFLPEFPEWMPLHEWFPSVFLPTGMCTDIPWEMFGITMSQ) are Periplasmic-facing. Cys104 and Cys130 form a disulfide bridge. Residues 145 to 163 (WMVVAFSTYLIALVVFIVP) form a helical membrane-spanning segment. Over 164-171 (ALMPTKKA) the chain is Cytoplasmic.

It belongs to the DsbB family.

The protein resides in the cell inner membrane. In terms of biological role, required for disulfide bond formation in some periplasmic proteins. Acts by oxidizing the DsbA protein. The sequence is that of Disulfide bond formation protein B from Shewanella loihica (strain ATCC BAA-1088 / PV-4).